The following is a 394-amino-acid chain: Glycerol-3-phosphate dehydrogenase [NAD(+)] 2 (394 aa).

NAD(+) is bound by residues 41–46 (GSGNWG), Lys-152, and Ala-185. Substrate is bound at residue Lys-152. Lys-243 (proton acceptor) is an active-site residue. Residues Arg-308 and Gln-337 each coordinate NAD(+). 308 to 309 (RN) is a substrate binding site.

This sequence belongs to the NAD-dependent glycerol-3-phosphate dehydrogenase family.

The enzyme catalyses sn-glycerol 3-phosphate + NAD(+) = dihydroxyacetone phosphate + NADH + H(+). The sequence is that of Glycerol-3-phosphate dehydrogenase [NAD(+)] 2 (gpd2) from Cyberlindnera jadinii (Torula yeast).